Reading from the N-terminus, the 214-residue chain is Adenylate kinase (214 aa).

Residue 10–15 participates in ATP binding; the sequence is GAGKGT. The tract at residues 30 to 59 is NMP; that stretch reads STGDMLRAAVKAGTPLGLEAKKVMDAGQLV. AMP contacts are provided by residues T31, R36, 57-59, 85-88, and Q92; these read QLV and GFPR. Positions 122 to 159 are LID; it reads GRRVHPGSGRVYHIVFNQPKVEGKDDVTGEDLAIRPDD. ATP-binding positions include R123 and 132–133; that span reads VY. Residues R156 and R167 each coordinate AMP. Q200 serves as a coordination point for ATP.

Belongs to the adenylate kinase family. In terms of assembly, monomer.

Its subcellular location is the cytoplasm. It catalyses the reaction AMP + ATP = 2 ADP. Its pathway is purine metabolism; AMP biosynthesis via salvage pathway; AMP from ADP: step 1/1. In terms of biological role, catalyzes the reversible transfer of the terminal phosphate group between ATP and AMP. Plays an important role in cellular energy homeostasis and in adenine nucleotide metabolism. This is Adenylate kinase from Shewanella halifaxensis (strain HAW-EB4).